The chain runs to 469 residues: Putative dipeptidase SAUSA300_1697 (469 aa).

Position 84 (His84) interacts with Zn(2+). The active site involves Asp86. Asp115 contributes to the Zn(2+) binding site. Residue Glu149 is the Proton acceptor of the active site. Zn(2+)-binding residues include Glu150, Asp173, and His440.

The protein belongs to the peptidase M20A family. Zn(2+) serves as cofactor.

In Staphylococcus aureus (strain USA300), this protein is Putative dipeptidase SAUSA300_1697.